A 316-amino-acid chain; its full sequence is Acetyl-coenzyme A carboxylase carboxyl transferase subunit beta (316 aa).

The region spanning 39-308 is the CoA carboxyltransferase N-terminal domain; the sequence is LWHKCSKCGV…TPPMVLWETM (270 aa). Zn(2+) is bound by residues Cys-43, Cys-46, Cys-62, and Cys-65. The C4-type zinc-finger motif lies at 43–65; the sequence is CSKCGVLTYTKDLRANQMVCVEC.

The protein belongs to the AccD/PCCB family. Acetyl-CoA carboxylase is a heterohexamer composed of biotin carboxyl carrier protein (AccB), biotin carboxylase (AccC) and two subunits each of ACCase subunit alpha (AccA) and ACCase subunit beta (AccD). Zn(2+) serves as cofactor.

It localises to the cytoplasm. The catalysed reaction is N(6)-carboxybiotinyl-L-lysyl-[protein] + acetyl-CoA = N(6)-biotinyl-L-lysyl-[protein] + malonyl-CoA. It functions in the pathway lipid metabolism; malonyl-CoA biosynthesis; malonyl-CoA from acetyl-CoA: step 1/1. Its function is as follows. Component of the acetyl coenzyme A carboxylase (ACC) complex. Biotin carboxylase (BC) catalyzes the carboxylation of biotin on its carrier protein (BCCP) and then the CO(2) group is transferred by the transcarboxylase to acetyl-CoA to form malonyl-CoA. The sequence is that of Acetyl-coenzyme A carboxylase carboxyl transferase subunit beta from Trichormus variabilis (strain ATCC 29413 / PCC 7937) (Anabaena variabilis).